Reading from the N-terminus, the 482-residue chain is Long chain base biosynthesis protein 1c (482 aa).

The helical transmembrane segment at 33-53 (FGIHIDGHLVVEGLLIAAILF) threads the bilayer.

This sequence belongs to the class-II pyridoxal-phosphate-dependent aminotransferase family. As to quaternary structure, heterodimer with LCB2. Component of the serine palmitoyltransferase (SPT) complex, composed of LCB1 and LCB2. Pyridoxal 5'-phosphate serves as cofactor.

The protein localises to the endoplasmic reticulum membrane. It catalyses the reaction L-serine + hexadecanoyl-CoA + H(+) = 3-oxosphinganine + CO2 + CoA. It participates in lipid metabolism; sphingolipid metabolism. Its function is as follows. Serine palmitoyltransferase (SPT). The heterodimer formed with LCB2 constitutes the catalytic core. The sequence is that of Long chain base biosynthesis protein 1c from Oryza sativa subsp. japonica (Rice).